The primary structure comprises 631 residues: Sphingomyelin phosphodiesterase (631 aa).

Residues 1-23 (MPRYGASLRQSCPRSGREQGQDG) form a disordered region. The first 46 residues, 1–46 (MPRYGASLRQSCPRSGREQGQDGTAGAPGLLWMGLVLALALALALA), serve as a signal peptide directing secretion. In terms of domain architecture, Saposin B-type spans 87-171 (GNLTCPICKG…LLGSTCGHWD (85 aa)). N-linked (GlcNAc...) asparagine glycosylation occurs at asparagine 88. Cystine bridges form between cysteine 91–cysteine 167, cysteine 94–cysteine 159, and cysteine 122–cysteine 133. Residue asparagine 177 is glycosylated (N-linked (GlcNAc...) asparagine). Positions 208 and 210 each coordinate Zn(2+). Cystine bridges form between cysteine 223-cysteine 228 and cysteine 229-cysteine 252. Zn(2+) contacts are provided by aspartate 280 and asparagine 320. 2 N-linked (GlcNAc...) asparagine glycosylation sites follow: asparagine 337 and asparagine 397. Cysteines 387 and 433 form a disulfide. Histidine 427, histidine 459, and histidine 461 together coordinate Zn(2+). N-linked (GlcNAc...) asparagine glycosylation occurs at asparagine 505. A Phosphoserine; by PKC/PRKCD modification is found at serine 510. An N-linked (GlcNAc...) asparagine glycan is attached at asparagine 522. 2 disulfides stabilise this stretch: cysteine 586/cysteine 590 and cysteine 596/cysteine 609.

This sequence belongs to the acid sphingomyelinase family. In terms of assembly, monomer. Interacts with SORT1; the interaction is required for SMPD1 targeting to lysosomes. Zn(2+) is required as a cofactor. Proteolytically processed. Mature lysosomal form arises from C-terminal proteolytic processing of pro-sphingomyelin phosphodiesterase. Post-translationally, this form is generated following cleavage by CASP7 in the extracellular milieu. It shows increased activity. In terms of processing, both lysosomal and secreted forms are glycosylated but they show a differential pattern of glycosylation. Phosphorylated at Ser-510 by PRKCD upon stress stimuli. Phosphorylation is required for secretion.

The protein resides in the lysosome. The protein localises to the lipid droplet. It localises to the secreted. Its subcellular location is the extracellular space. It catalyses the reaction a sphingomyelin + H2O = phosphocholine + an N-acylsphing-4-enine + H(+). The enzyme catalyses N-(octadecanoyl)-sphing-4-enine-1-phosphocholine + H2O = N-octadecanoylsphing-4-enine + phosphocholine + H(+). It carries out the reaction 1,2-dihexadecanoyl-sn-glycero-3-phosphocholine + H2O = 1,2-dihexadecanoyl-sn-glycerol + phosphocholine + H(+). The catalysed reaction is a 1,2-diacyl-sn-glycero-3-phosphocholine + H2O = phosphocholine + a 1,2-diacyl-sn-glycerol + H(+). Hydrolysis of liposomal sphingomyelin is stimulated by incorporation of diacylglycerol (DAG), ceramide and free fatty acids into the liposomal membranes. Phosphatidylcholine hydrolysis is inhibited by incorporation of cholesterol, ceramide, DAG, monoacylglycerol and fatty acids. Antidepressants, namely amitriptyline, imipramine, desipramine, fluoxetine, sertraline, escitalopram, and maprotiline inhibit sphingomyelin phosphodiesterase activity. Its activity is regulated as follows. (Microbial infection) The secretory form is activated by P.aeruginosa, this activation results in the release of ceramide in the outer leaflet of the plasma membrane. With respect to regulation, (Microbial infection) The secretory form is activated by human coronavirus SARS-CoV-2, this activation results in the release of ceramide in the outer leaflet of the plasma membrane. Functionally, converts sphingomyelin to ceramide. Exists as two enzymatic forms that arise from alternative trafficking of a single protein precursor, one that is targeted to the endolysosomal compartment, whereas the other is released extracellularly. However, in response to various forms of stress, lysosomal exocytosis may represent a major source of the secretory form. Its function is as follows. In the lysosomes, converts sphingomyelin to ceramide. Plays an important role in the export of cholesterol from the intraendolysosomal membranes. Also has phospholipase C activities toward 1,2-diacylglycerolphosphocholine and 1,2-diacylglycerolphosphoglycerol. Modulates stress-induced apoptosis through the production of ceramide. When secreted, modulates cell signaling with its ability to reorganize the plasma membrane by converting sphingomyelin to ceramide. Secreted form is increased in response to stress and inflammatory mediators such as IL1B, IFNG or TNF as well as upon infection with bacteria and viruses. Produces the release of ceramide in the outer leaflet of the plasma membrane playing a central role in host defense. Ceramide reorganizes these rafts into larger signaling platforms that are required to internalize P.aeruginosa, induce apoptosis and regulate the cytokine response in infected cells. In wounded cells, the lysosomal form is released extracellularly in the presence of Ca(2+) and promotes endocytosis and plasma membrane repair. In terms of biological role, this form is generated following cleavage by CASP7 in the extracellular milieu in response to bacterial infection. It shows increased ability to convert sphingomyelin to ceramide and promotes plasma membrane repair. Plasma membrane repair by ceramide counteracts the action of gasdermin-D (GSDMD) perforin (PRF1) pores that are formed in response to bacterial infection. Functionally, (Microbial infection) Secretion is activated by bacteria such as P.aeruginosa, N.gonorrhoeae and others, this activation results in the release of ceramide in the outer leaflet of the plasma membrane which facilitates the infection. Its function is as follows. (Microbial infection) Secretion is activated by human coronaviruses SARS-CoV and SARS-CoV-2 as well as Zaire ebolavirus, this activation results in the release of ceramide in the outer leaflet of the plasma membrane which facilitates the infection. Lacks residues that bind the cofactor Zn(2+) and has no enzyme activity. This Homo sapiens (Human) protein is Sphingomyelin phosphodiesterase.